Reading from the N-terminus, the 577-residue chain is MAGLTVRDPAVDRSLRSVFVGNIPYEATEEQLKDIFSEVGPVVSFRLVYDRETGKPKGYGFCEYQDQETALSAMRNLNGREFSGRALRVDNAASEKNKEELKSLGTGAPVIESPYGETISPEDAPESISKAVASLPPEQMFELMKQMKLCVQNSPQEARNMLLQNPQLAYALLQAQVVMRIVDPEIALKILHRQTNIPTLIAGNPQPVHGAGPGSGSNVSMNQQNPQAPQAQSLGGMHVNGAPPLMQASMQGGVPAPGQIPAAVTGPGPGSLAPGGGMQAQVGMPGSGPVSMERGQVPMQDPRAAMQRGSLPANVPTPRGLLGDAPNDPRGGTLLSVTGEVEPRGYLGPPHQGPPMHHVPGHESRGPPPHELRGGPLPEPRPLMAEPRGPMLDQRGPPLDGRGGRDPRGIDARGMEARAMEARGLDARGLEARAMEARAMEARAMEARAMEARAMEVRGMEARGMDTRGPVPGPRGPIPSGMQGPSPINMGAVVPQGSRQVPVMQGTGLQGASIQGGSQPGGFSPGQNQVTPQDHEKAALIMQVLQLTADQIAMLPPEQRQSILILKEQIQKSTGAP.

S14 carries the post-translational modification Phosphoserine. Residues 16–94 (RSVFVGNIPY…RALRVDNAAS (79 aa)) enclose the RRM domain. The interval 108–248 (APVIESPYGE…VNGAPPLMQA (141 aa)) is interactions with CSTF3 and SYMPK. K189 is covalently cross-linked (Glycyl lysine isopeptide (Lys-Gly) (interchain with G-Cter in SUMO2)). The segment at 207–230 (PVHGAGPGSGSNVSMNQQNPQAPQ) is disordered. The residue at position 308 (R308) is an Omega-N-methylarginine. Residues 319-409 (RGLLGDAPND…DGRGGRDPRG (91 aa)) are disordered. Residues 360–373 (PGHESRGPPPHELR) show a composition bias toward basic and acidic residues. The stretch at 410–414 (IDARG) is one 1; approximate repeat. Residues 410–469 (IDARGMEARAMEARGLDARGLEARAMEARAMEARAMEARAMEARAMEVRGMEARGMDTRG) are 12 X 5 AA tandem repeats of M-E-A-R-[AG]. 2 consecutive repeat copies span residues 415–419 (MEARA) and 420–424 (MEARG). The stretch at 425-429 (LDARG) is one 4; approximate repeat. A 5; approximate repeat occupies 430–434 (LEARA). Repeat copies occupy residues 435–439 (MEARA), 440–444 (MEARA), 445–449 (MEARA), and 450–454 (MEARA). Residues 455–459 (MEVRG) form a 10; approximate repeat. Repeat 11 spans residues 460 to 464 (MEARG). A 12; approximate repeat occupies 465-469 (MDTRG). Omega-N-methylarginine is present on residues R468 and R475. The tract at residues 509–532 (LQGASIQGGSQPGGFSPGQNQVTP) is disordered. An interaction with RPO2TC1 region spans residues 514–577 (IQGGSQPGGF…EQIQKSTGAP (64 aa)). A phosphoserine mark is found at S518 and S524.

As to quaternary structure, the CSTF complex is composed of CSTF1 (50 kDa subunit), CSTF2 (64 kDa subunit) and CSTF3 (77 kDa subunit). CSTF2 directly interacts with CSTF3, SYMPK and RPO2TC1. Interacts with HSF1 in heat-stressed cells. Interacts with CPSF2, CPSF3 and FIP1L1. Interacts with DDX1.

It localises to the nucleus. One of the multiple factors required for polyadenylation and 3'-end cleavage of mammalian pre-mRNAs. This subunit is directly involved in the binding to pre-mRNAs. The polypeptide is Cleavage stimulation factor subunit 2 (CSTF2) (Pongo abelii (Sumatran orangutan)).